A 683-amino-acid polypeptide reads, in one-letter code: Methionine--tRNA ligase (683 aa).

The short motif at 15–25 (PYANGPIHLGH) is the 'HIGH' region element. The Zn(2+) site is built by Cys146, Cys149, Cys159, and Cys162. Positions 332–336 (KMSKS) match the 'KMSKS' region motif. Position 335 (Lys335) interacts with ATP. The region spanning 581–683 (DFFKVDLRVA…AGAKAGQRVK (103 aa)) is the tRNA-binding domain.

This sequence belongs to the class-I aminoacyl-tRNA synthetase family. MetG type 1 subfamily. In terms of assembly, homodimer. Requires Zn(2+) as cofactor.

The protein localises to the cytoplasm. The enzyme catalyses tRNA(Met) + L-methionine + ATP = L-methionyl-tRNA(Met) + AMP + diphosphate. Functionally, is required not only for elongation of protein synthesis but also for the initiation of all mRNA translation through initiator tRNA(fMet) aminoacylation. This is Methionine--tRNA ligase from Histophilus somni (strain 129Pt) (Haemophilus somnus).